Consider the following 339-residue polypeptide: Uracil nucleotide/cysteinyl leukotriene receptor (339 aa).

At 1 to 36 (MNGLEAALPSLTDNSSLAYSEQCGQETPLENMLFAC) the chain is on the extracellular side. N14 carries N-linked (GlcNAc...) asparagine glycosylation. The helical transmembrane segment at 37–57 (FYLLDFILAFVGNALALWLFI) threads the bilayer. The Cytoplasmic segment spans residues 58-64 (WDHKSGT). A helical membrane pass occupies residues 65 to 85 (PANVFLMHLAVADLSCVLVLP). At 86–105 (TRLVYHFSGNHWPFGEIPCR) the chain is on the extracellular side. C104 and C181 are joined by a disulfide. A helical membrane pass occupies residues 106–126 (LTGFLFYLNMYASIYFLTCIS). Residues 127 to 147 (ADRFLAIVHPVKSLKLRRPLY) are Cytoplasmic-facing. The helical transmembrane segment at 148–168 (AHLACAFLWIVVAVAMAPLLV) threads the bilayer. The Extracellular portion of the chain corresponds to 169–195 (SPQTVQTNHTVVCLQLYREKASHHALA). Residue N176 is glycosylated (N-linked (GlcNAc...) asparagine). The chain crosses the membrane as a helical span at residues 196-216 (SLAVAFTFPFITTVTCYLLII). At 217 to 232 (RSLRQGPRIEKHLKNK) the chain is on the cytoplasmic side. Residues 233-253 (AVRMIAMVLAIFLICFVPYHI) traverse the membrane as a helical segment. Topologically, residues 254-280 (HRSVYVLHYRGGGTSCAAQRALALGNR) are extracellular. Residues 281–301 (ITSCLTSLNGALDPVMYFFVA) traverse the membrane as a helical segment. Residues 302 to 339 (EKFRHALCNLLCSKRLTGPPPSFEGKTNESSLSARSEL) are Cytoplasmic-facing.

The protein belongs to the G-protein coupled receptor 1 family.

It is found in the cell membrane. Functionally, dual specificity receptor for uracil nucleotides and cysteinyl leukotrienes (CysLTs). Signals through G(i) and inhibition of adenylyl cyclase. May mediate brain damage by nucleotides and CysLTs following ischemia. The chain is Uracil nucleotide/cysteinyl leukotriene receptor from Mus musculus (Mouse).